A 62-amino-acid chain; its full sequence is UPF0434 protein Fphi_1862 (62 aa).

Belongs to the UPF0434 family.

In Francisella philomiragia subsp. philomiragia (strain ATCC 25017 / CCUG 19701 / FSC 153 / O#319-036), this protein is UPF0434 protein Fphi_1862.